Reading from the N-terminus, the 259-residue chain is Cobalt-precorrin-4 C(11)-methyltransferase (259 aa).

This sequence belongs to the precorrin methyltransferase family.

The enzyme catalyses Co-precorrin-4 + S-adenosyl-L-methionine = Co-precorrin-5A + S-adenosyl-L-homocysteine + H(+). The protein operates within cofactor biosynthesis; adenosylcobalamin biosynthesis; cob(II)yrinate a,c-diamide from sirohydrochlorin (anaerobic route): step 4/10. Catalyzes the methylation of C-11 in cobalt-precorrin-4 to form cobalt-precorrin-5A. The chain is Cobalt-precorrin-4 C(11)-methyltransferase (cbiF) from Methanocaldococcus jannaschii (strain ATCC 43067 / DSM 2661 / JAL-1 / JCM 10045 / NBRC 100440) (Methanococcus jannaschii).